Reading from the N-terminus, the 89-residue chain is Large ribosomal subunit protein eL43 (89 aa).

Zn(2+)-binding residues include Cys-38, Cys-41, Cys-56, and Cys-59. A C4-type zinc finger spans residues 38-59 (CPSCDRPGVKRESRGIWKCRKC).

The protein belongs to the eukaryotic ribosomal protein eL43 family. Putative zinc-binding subfamily. Part of the 50S ribosomal subunit. Zn(2+) is required as a cofactor.

In terms of biological role, binds to the 23S rRNA. The sequence is that of Large ribosomal subunit protein eL43 from Methanothermobacter thermautotrophicus (strain ATCC 29096 / DSM 1053 / JCM 10044 / NBRC 100330 / Delta H) (Methanobacterium thermoautotrophicum).